A 267-amino-acid chain; its full sequence is MSWNDDDVFAGSANNDDVVLMDSWDAEEPIMESWDAEETPAKKETSPKPDSKKNAKKDSKKDKKSSTDQVLLEIDVLDEKTRKELLKKAELESDLNNAAELFGSLGVAEEHPRARALRKEQEVADAMRPAAFTKDTPIESHPLFNGESKKDYQDLRKALATAIVTMNEKSSLNYSSSLAIDLIRDVAKPMSIESIRQSIATLNVLMKDKEREERRARLAKVKGGTATGGAGKKKAKAKTNLGGAFKKDQEFDMGVDTYEDFGDDDFM.

The disordered stretch occupies residues 1-70 (MSWNDDDVFA…KDKKSSTDQV (70 aa)). The span at 24 to 38 (WDAEEPIMESWDAEE) shows a compositional bias: acidic residues. Basic and acidic residues predominate over residues 39 to 66 (TPAKKETSPKPDSKKNAKKDSKKDKKSS). Residues 192-220 (IESIRQSIATLNVLMKDKEREERRARLAK) are a coiled coil.

It belongs to the eIF-3 subunit J family. In terms of assembly, component of the eukaryotic translation initiation factor 3 (eIF-3) complex.

The protein resides in the cytoplasm. Component of the eukaryotic translation initiation factor 3 (eIF-3) complex, which is involved in protein synthesis of a specialized repertoire of mRNAs and, together with other initiation factors, stimulates binding of mRNA and methionyl-tRNAi to the 40S ribosome. The eIF-3 complex specifically targets and initiates translation of a subset of mRNAs involved in cell proliferation. In Vanderwaltozyma polyspora (strain ATCC 22028 / DSM 70294 / BCRC 21397 / CBS 2163 / NBRC 10782 / NRRL Y-8283 / UCD 57-17) (Kluyveromyces polysporus), this protein is Eukaryotic translation initiation factor 3 subunit J.